Consider the following 348-residue polypeptide: Nicotinate-nucleotide--dimethylbenzimidazole phosphoribosyltransferase (348 aa).

The active-site Proton acceptor is the glutamate 317.

It belongs to the CobT family.

It catalyses the reaction 5,6-dimethylbenzimidazole + nicotinate beta-D-ribonucleotide = alpha-ribazole 5'-phosphate + nicotinate + H(+). It functions in the pathway nucleoside biosynthesis; alpha-ribazole biosynthesis; alpha-ribazole from 5,6-dimethylbenzimidazole: step 1/2. In terms of biological role, catalyzes the synthesis of alpha-ribazole-5'-phosphate from nicotinate mononucleotide (NAMN) and 5,6-dimethylbenzimidazole (DMB). This chain is Nicotinate-nucleotide--dimethylbenzimidazole phosphoribosyltransferase, found in Clostridioides difficile (strain 630) (Peptoclostridium difficile).